We begin with the raw amino-acid sequence, 480 residues long: uncharacterized protein (480 aa).

A DNA-binding region (zn(2)-C6 fungal-type) is located at residues 16–46; it reads CDRCRRRKIRCTGSDIPGQPCLACQKAHADC. Positions 298–307 are enriched in low complexity; the sequence is SFGASVSPKS. The interval 298–325 is disordered; the sequence is SFGASVSPKSTPGSNSTGAAVDTNSVHS. Positions 308–325 are enriched in polar residues; the sequence is TPGSNSTGAAVDTNSVHS.

It is found in the cytoplasm. The protein resides in the nucleus. This is an uncharacterized protein from Schizosaccharomyces pombe (strain 972 / ATCC 24843) (Fission yeast).